Reading from the N-terminus, the 1078-residue chain is Transmembrane protein 132B (1078 aa).

At 1-903 (MFGAASRMDT…LTDLEIGMYA (903 aa)) the chain is on the extracellular side. N-linked (GlcNAc...) asparagine glycosylation is found at Asn-343, Asn-366, and Asn-381. The interval 834–887 (RGTPVGQEESTNKSTTPQSPMEGKNKLLKSGGPDAFTSFPTQGKSPDPNNPSDL) is disordered. Positions 841 to 852 (EESTNKSTTPQS) are enriched in polar residues. The chain crosses the membrane as a helical span at residues 904-924 (LLCVFCLAILVFLINCVAFAW). Over 925–1078 (KYRHKRFAVS…DYMESLQDQM (154 aa)) the chain is Cytoplasmic.

This sequence belongs to the TMEM132 family.

The protein localises to the membrane. This is Transmembrane protein 132B (TMEM132B) from Homo sapiens (Human).